The chain runs to 66 residues: Gallinacin-5 (66 aa).

The signal sequence occupies residues M1–P19. Residues G20–R25 constitute a propeptide that is removed on maturation. Disulfide bonds link C31/C59, C38/C53, and C43/C60.

It belongs to the beta-defensin family. As to expression, strong expression in the tongue and bone marrow. Low expression in the esophagus, trachea, lung, brain and ovary. Expressed in the ovarian stroma, but not in the ovarian follicles.

Its subcellular location is the secreted. It is found in the cytoplasmic granule. Has bactericidal activity. This chain is Gallinacin-5 (GAL5), found in Gallus gallus (Chicken).